Consider the following 153-residue polypeptide: UPF0756 membrane protein BA_4840/GBAA_4840/BAS4489 (153 aa).

Transmembrane regions (helical) follow at residues 8-28 (FLFI…TVAI), 54-74 (LGVT…EIGF), 87-107 (WIAL…VQLL), and 117-137 (LVFG…GPLI).

Belongs to the UPF0756 family.

It localises to the cell membrane. The protein is UPF0756 membrane protein BA_4840/GBAA_4840/BAS4489 of Bacillus anthracis.